A 541-amino-acid chain; its full sequence is Atlastin (541 aa).

The Cytoplasmic segment spans residues 1-424 (MGGSAVQVIN…NIFKAARTPA (424 aa)). Residues 35 to 284 (DRFVCVVSVA…LVPMLLAPDN (250 aa)) form the GB1/RHD3-type G domain. Residues arginine 48, lysine 49, glycine 50, lysine 51, and serine 52 each contribute to the GDP site. GTP is bound by residues arginine 48, lysine 49, glycine 50, lysine 51, serine 52, and phenylalanine 53. Serine 52 lines the Mg(2+) pocket. Residue aspartate 121 coordinates Mg(2+). GDP contacts are provided by arginine 192, aspartate 193, and valine 251. GTP is bound by residues arginine 192, aspartate 193, and valine 251. A 3HB (three-helix bundle) domain region spans residues 322 to 413 (MLVATAEANH…FTNYQAHNES (92 aa)). The segment at 414-422 (KNIFKAART) is linker. Residues 425-445 (VYFACAVIMYILSGIFGLVGL) traverse the membrane as a helical segment. Residues 446-448 (YTF) are Lumenal-facing. Residues 449-469 (ANFCNLVMGVALLTLALWAYI) form a helical membrane-spanning segment. The Cytoplasmic portion of the chain corresponds to 470–541 (RYSGELSDFG…NASNGKVKRS (72 aa)). Phosphothreonine is present on threonine 514.

This sequence belongs to the TRAFAC class dynamin-like GTPase superfamily. GB1/RHD3 GTPase family. GB1 subfamily. Monomeric and homodimeric. The homodimer, transiently formed by two molecules on opposing membranes, is the active form mediating ER membrane fusion. Interacts with spas; interaction may regulate microtubule dynamics. In terms of tissue distribution, ubiquitously expressed.

The protein localises to the endoplasmic reticulum membrane. It is found in the golgi apparatus membrane. The catalysed reaction is GTP + H2O = GDP + phosphate + H(+). Functionally, membrane-anchored GTPase that mediates the GTP-dependent fusion of endoplasmic reticulum (ER) membranes, maintaining the continuous ER network. It facilitates the formation of three-way junctions where ER tubules intersect. Two atlastin-1 on neighboring ER tubules bind GTP and form loose homodimers through the GB1/RHD3-type G domains and 3HB regions. Upon GTP hydrolysis, the 3HB regions tighten, pulling the membranes together to drive their fusion. After fusion, the homodimer disassembles upon release of inorganic phosphate (Pi). Subsequently, GDP dissociates, resetting the monomers to a conformation ready for a new fusion cycle. May also regulate more or less directly Golgi biogenesis. May also regulate microtubule polymerization and Golgi biogenesis. Required for dopaminergic neurons survival and the growth of muscles and synapses at neuromuscular junctions. The polypeptide is Atlastin (atl) (Drosophila melanogaster (Fruit fly)).